The following is a 337-amino-acid chain: MEDFSLDGNHGHVPVMRDRMAALIAEHVEALGENAVIVDATLGAGGHAEFFLNTFPKARLIGLDRDQNALRDARARLAPFGERFIGVQTRFDGLREVLESVEGDIIDLAREHGIAGALFDLGVSSMQLDQVERGFAYRTDAPLDMRMDATQGITAADILNTYSHGDIARILKTYGDERFAGKIASAVLKEREKEPFTTSARLVELLYDAIPAATRRTGGHPAKRTFQALRVEVNNELDSLKNVLPQITDALNVGGRAVFMSYQSHEDKLVKKFFTDLTTSKTPPGLPVDLPGTAPQFKQVTRGAETASEAEIEENPRAAPVKVRAIERIGNNSGDLS.

S-adenosyl-L-methionine contacts are provided by residues Gly-45–His-47, Asp-64, Phe-91, Asp-120, and Gln-127.

Belongs to the methyltransferase superfamily. RsmH family.

The protein localises to the cytoplasm. It carries out the reaction cytidine(1402) in 16S rRNA + S-adenosyl-L-methionine = N(4)-methylcytidine(1402) in 16S rRNA + S-adenosyl-L-homocysteine + H(+). Functionally, specifically methylates the N4 position of cytidine in position 1402 (C1402) of 16S rRNA. This chain is Ribosomal RNA small subunit methyltransferase H, found in Corynebacterium glutamicum (strain ATCC 13032 / DSM 20300 / JCM 1318 / BCRC 11384 / CCUG 27702 / LMG 3730 / NBRC 12168 / NCIMB 10025 / NRRL B-2784 / 534).